Here is a 319-residue protein sequence, read N- to C-terminus: Phosphatidylglycerol--prolipoprotein diacylglyceryl transferase (319 aa).

Transmembrane regions (helical) follow at residues 21 to 41 (PIPI…AIWL), 50 to 70 (GGNP…GIIG), and 98 to 118 (NGGL…AVFF). Arg144 serves as a coordination point for a 1,2-diacyl-sn-glycero-3-phospho-(1'-sn-glycerol). Helical transmembrane passes span 191–211 (VHPT…LLMW) and 254–274 (INTI…FLLK). Residues 295 to 319 (AVASPDGKPLPKAGEGIDGETPSTR) form a disordered region.

It belongs to the Lgt family.

It localises to the cell membrane. The enzyme catalyses L-cysteinyl-[prolipoprotein] + a 1,2-diacyl-sn-glycero-3-phospho-(1'-sn-glycerol) = an S-1,2-diacyl-sn-glyceryl-L-cysteinyl-[prolipoprotein] + sn-glycerol 1-phosphate + H(+). It participates in protein modification; lipoprotein biosynthesis (diacylglyceryl transfer). Its function is as follows. Catalyzes the transfer of the diacylglyceryl group from phosphatidylglycerol to the sulfhydryl group of the N-terminal cysteine of a prolipoprotein, the first step in the formation of mature lipoproteins. The chain is Phosphatidylglycerol--prolipoprotein diacylglyceryl transferase from Corynebacterium glutamicum (strain R).